The following is a 291-amino-acid chain: MTTLAIDIGGTKLAAALIDNNLRISQRRELPTPASKTPDALREALKALVEPLRAEARQVAIASTGIIQEGMLLALNPHNLGGLLHFPLVQTLETIAGLPTLAVNDAQAAAWAEYHALPDDIRDMVFITVSTGVGGGVVCDGKLLTGKGGLAGHLGHTLADPHGPVCGCGRVGCVEAIASGRGMAAAARDDLAGCDAKTLFIRAGEGHQQARHLVSQSAQVIARMIADVKATTDCQCVVIGGSVGLAEGYLEQVRAFLMQEPAPYHVALSAARYRHDAGLLGAALLAQGDTL.

ATP contacts are provided by residues 5–12 and 132–139; these read AIDIGGTK and GVGGGVVC. H156, C166, C168, and C173 together coordinate Zn(2+).

This sequence belongs to the ROK (NagC/XylR) family. NanK subfamily. As to quaternary structure, homodimer.

It carries out the reaction an N-acyl-D-mannosamine + ATP = an N-acyl-D-mannosamine 6-phosphate + ADP + H(+). The protein operates within amino-sugar metabolism; N-acetylneuraminate degradation; D-fructose 6-phosphate from N-acetylneuraminate: step 2/5. Its function is as follows. Catalyzes the phosphorylation of N-acetylmannosamine (ManNAc) to ManNAc-6-P. This Salmonella agona (strain SL483) protein is N-acetylmannosamine kinase.